The primary structure comprises 456 residues: Signal transduction histidine-protein kinase ArlS (456 aa).

Helical transmembrane passes span 13 to 33 (LITT…IIFF) and 157 to 177 (IVAL…SYIF). In terms of domain architecture, HAMP spans 179–232 (SQITKPIVTMSNKMNQIRRDGFQNKLELTTNYEETDNLIDTFNEMMYQIEESFN). One can recognise a Histidine kinase domain in the interval 240 to 456 (DASHELRTPL…TFKISFPVLN (217 aa)). Residue His-243 is modified to Phosphohistidine; by autocatalysis.

Autophosphorylated.

It localises to the cell membrane. It carries out the reaction ATP + protein L-histidine = ADP + protein N-phospho-L-histidine.. Its function is as follows. Member of the two-component regulatory system ArlS/ArlR. ArlS probably functions as a sensor protein kinase which is autophosphorylated at a histidine residue and transfers its phosphate group to ArlR. This chain is Signal transduction histidine-protein kinase ArlS (arlS), found in Staphylococcus epidermidis (strain ATCC 35984 / DSM 28319 / BCRC 17069 / CCUG 31568 / BM 3577 / RP62A).